The primary structure comprises 351 residues: ATP-dependent 6-phosphofructokinase subunit gamma (351 aa).

In terms of assembly, heterododecamer of 4 alpha, 4 beta and 4 gamma chains. The gamma chain bridges the N-terminal halves of the alpha and beta subunits.

The protein localises to the cytoplasm. It functions in the pathway carbohydrate degradation; glycolysis; D-glyceraldehyde 3-phosphate and glycerone phosphate from D-glucose: step 3/4. Its function is as follows. Structural subunit of pyrophosphate--fructose 6-phosphate 1-phosphotransferase. Not required for catalytic activity. Fine-tunes allosteric regulation of the ATP-PFK by ATP, fructose 2,6-bisphosphate and AMP. The chain is ATP-dependent 6-phosphofructokinase subunit gamma (PFK3) from Komagataella phaffii (strain GS115 / ATCC 20864) (Yeast).